The chain runs to 146 residues: Nitric oxide reductase subunit C (146 aa).

The helical; Signal-anchor transmembrane segment at 13 to 29 (IYFGGSVFFFLVFLGLT) threads the bilayer. The heme c site is built by Cys61, Cys64, and His65.

In terms of assembly, heterodimer of cytochromes b (large subunit) and c (small subunit).

Its subcellular location is the cell membrane. Functionally, component of the anaerobic respiratory chain that transforms nitrate to dinitrogen (denitrification). This chain is Nitric oxide reductase subunit C (norC), found in Stutzerimonas stutzeri (Pseudomonas stutzeri).